A 242-amino-acid chain; its full sequence is Large ribosomal subunit protein uL30x (242 aa).

It belongs to the universal ribosomal protein uL30 family.

In Arabidopsis thaliana (Mouse-ear cress), this protein is Large ribosomal subunit protein uL30x (RPL7C).